The chain runs to 195 residues: Imidazoleglycerol-phosphate dehydratase (195 aa).

This sequence belongs to the imidazoleglycerol-phosphate dehydratase family.

The protein localises to the cytoplasm. The enzyme catalyses D-erythro-1-(imidazol-4-yl)glycerol 3-phosphate = 3-(imidazol-4-yl)-2-oxopropyl phosphate + H2O. It functions in the pathway amino-acid biosynthesis; L-histidine biosynthesis; L-histidine from 5-phospho-alpha-D-ribose 1-diphosphate: step 6/9. The polypeptide is Imidazoleglycerol-phosphate dehydratase (Methylobacterium radiotolerans (strain ATCC 27329 / DSM 1819 / JCM 2831 / NBRC 15690 / NCIMB 10815 / 0-1)).